The chain runs to 469 residues: Sorting and assembly machinery component 50 homolog (469 aa).

The 81-residue stretch at 45–125 (VVVQHVHFDG…LDVTFEVTEL (81 aa)) folds into the POTRA domain. K255 carries the N6-methyllysine modification.

The protein belongs to the SAM50/omp85 family. In terms of assembly, associates with the mitochondrial contact site and cristae organizing system (MICOS) complex, composed of at least MICOS10/MIC10, CHCHD3/MIC19, CHCHD6/MIC25, APOOL/MIC27, IMMT/MIC60, APOO/MIC23/MIC26 and QIL1/MIC13. This complex was also known under the names MINOS or MitOS complex. The MICOS complex associates with mitochondrial outer membrane proteins SAMM50, MTX1 and MTX2 (together described as components of the mitochondrial outer membrane sorting assembly machinery (SAM) complex) and DNAJC11, mitochondrial inner membrane protein TMEM11 and with HSPA9. The MICOS and SAM complexes together with DNAJC11 are part of a large protein complex spanning both membranes termed the mitochondrial intermembrane space bridging (MIB) complex. Interacts with IMMT/MIC60. Interacts with CHCHD3/MIC19. Interacts with ARMC1. (Microbial infection) Interacts with parasite T.gondii RH strain MAF1b1; the interaction is probably indirect and results in the disruption of the MIB complex and the formation of SPOTs (structures positive for outer mitochondrial membrane (OMM)), a cellular response to OMM stress, which leads to the constitutive shedding of OMM vesicles.

The protein resides in the mitochondrion outer membrane. It is found in the cytoplasm. It localises to the mitochondrion. Functionally, plays a crucial role in the maintenance of the structure of mitochondrial cristae and the proper assembly of the mitochondrial respiratory chain complexes. Required for the assembly of TOMM40 into the TOM complex. In Mus musculus (Mouse), this protein is Sorting and assembly machinery component 50 homolog (Samm50).